The chain runs to 473 residues: Probable glucose-6-phosphate 1-dehydrogenase C7.13c (473 aa).

NADP(+)-binding residues include Arg-43, Tyr-121, and Lys-144. D-glucose 6-phosphate contacts are provided by residues Lys-144, 174–178 (HYTAK), Glu-213, and Asp-232. His-237 (proton acceptor) is an active-site residue. Residue Lys-331 coordinates D-glucose 6-phosphate. Position 341 (Lys-341) interacts with NADP(+). Gln-366 provides a ligand contact to D-glucose 6-phosphate.

The protein belongs to the glucose-6-phosphate dehydrogenase family.

It localises to the cytoplasm. It carries out the reaction D-glucose 6-phosphate + NADP(+) = 6-phospho-D-glucono-1,5-lactone + NADPH + H(+). The protein operates within carbohydrate degradation; pentose phosphate pathway; D-ribulose 5-phosphate from D-glucose 6-phosphate (oxidative stage): step 1/3. Its function is as follows. Catalyzes the rate-limiting step of the oxidative pentose-phosphate pathway, which represents a route for the dissimilation of carbohydrates besides glycolysis. The main function of this enzyme is to provide reducing power (NADPH) and pentose phosphates for fatty acid and nucleic acid synthesis. This is Probable glucose-6-phosphate 1-dehydrogenase C7.13c from Schizosaccharomyces pombe (strain 972 / ATCC 24843) (Fission yeast).